A 307-amino-acid polypeptide reads, in one-letter code: D-alanine--D-alanine ligase (307 aa).

In terms of domain architecture, ATP-grasp spans 108–301 (KEVFAAAGLP…FPEFCAWMVE (194 aa)). 135-185 (LPPPYVVKPNCEGSSVGVYIVQADANGPPRLAPDMPRDLMVETYIPGRELT) contacts ATP. Mg(2+)-binding residues include D252, E268, and N270.

It belongs to the D-alanine--D-alanine ligase family. Mg(2+) serves as cofactor. The cofactor is Mn(2+).

The protein resides in the cytoplasm. It catalyses the reaction 2 D-alanine + ATP = D-alanyl-D-alanine + ADP + phosphate + H(+). Its pathway is cell wall biogenesis; peptidoglycan biosynthesis. In terms of biological role, cell wall formation. This is D-alanine--D-alanine ligase from Cereibacter sphaeroides (strain ATCC 17025 / ATH 2.4.3) (Rhodobacter sphaeroides).